Here is a 312-residue protein sequence, read N- to C-terminus: MLEKIYLANPRGFCAGVKYAISYVEQVQANSEEQIYVRKEIVHNRRVVEDMKKNGIRFINDLDEAPNGATVIFSAHGVSPSVVEAAKQRGMKIGDATCPLVTRVHRKARKIKDTHQIIYIGHEGHDEAIGTMGEAEMFLVESLEDIISLKDKIDPNKPLTYLMQTTLSVADTKNIIDQISKTFPFVEHPSKDDICYATTERQEAVSLMMDKIDAMLVIGADNSSNSLRLLQLAQKSKPHSFKVSTADDLSKEYIQNNEIKILGLTAGASTPQVLVDEIISKLKIFYPNANVELFPGSRDDSMNFKLPGVLLS.

Residue cysteine 14 participates in [4Fe-4S] cluster binding. (2E)-4-hydroxy-3-methylbut-2-enyl diphosphate contacts are provided by histidine 43 and histidine 76. Dimethylallyl diphosphate is bound by residues histidine 43 and histidine 76. Isopentenyl diphosphate-binding residues include histidine 43 and histidine 76. Cysteine 98 provides a ligand contact to [4Fe-4S] cluster. A (2E)-4-hydroxy-3-methylbut-2-enyl diphosphate-binding site is contributed by histidine 125. Histidine 125 provides a ligand contact to dimethylallyl diphosphate. Histidine 125 provides a ligand contact to isopentenyl diphosphate. The active-site Proton donor is glutamate 127. (2E)-4-hydroxy-3-methylbut-2-enyl diphosphate is bound at residue threonine 165. Position 195 (cysteine 195) interacts with [4Fe-4S] cluster. (2E)-4-hydroxy-3-methylbut-2-enyl diphosphate-binding residues include serine 223, serine 224, asparagine 225, and serine 269. Dimethylallyl diphosphate is bound by residues serine 223, serine 224, asparagine 225, and serine 269. The isopentenyl diphosphate site is built by serine 223, serine 224, asparagine 225, and serine 269.

It belongs to the IspH family. Requires [4Fe-4S] cluster as cofactor.

The enzyme catalyses isopentenyl diphosphate + 2 oxidized [2Fe-2S]-[ferredoxin] + H2O = (2E)-4-hydroxy-3-methylbut-2-enyl diphosphate + 2 reduced [2Fe-2S]-[ferredoxin] + 2 H(+). The catalysed reaction is dimethylallyl diphosphate + 2 oxidized [2Fe-2S]-[ferredoxin] + H2O = (2E)-4-hydroxy-3-methylbut-2-enyl diphosphate + 2 reduced [2Fe-2S]-[ferredoxin] + 2 H(+). Its pathway is isoprenoid biosynthesis; dimethylallyl diphosphate biosynthesis; dimethylallyl diphosphate from (2E)-4-hydroxy-3-methylbutenyl diphosphate: step 1/1. It functions in the pathway isoprenoid biosynthesis; isopentenyl diphosphate biosynthesis via DXP pathway; isopentenyl diphosphate from 1-deoxy-D-xylulose 5-phosphate: step 6/6. Catalyzes the conversion of 1-hydroxy-2-methyl-2-(E)-butenyl 4-diphosphate (HMBPP) into a mixture of isopentenyl diphosphate (IPP) and dimethylallyl diphosphate (DMAPP). Acts in the terminal step of the DOXP/MEP pathway for isoprenoid precursor biosynthesis. This chain is 4-hydroxy-3-methylbut-2-enyl diphosphate reductase, found in Leptospira interrogans serogroup Icterohaemorrhagiae serovar copenhageni (strain Fiocruz L1-130).